A 247-amino-acid polypeptide reads, in one-letter code: DNA polymerase epsilon subunit D (247 aa).

Residues 128–247 (KKHKADKKVP…EGQNSSDDDS (120 aa)) are disordered. Over residues 150 to 159 (RLKDNDEQII) the composition is skewed to basic and acidic residues. Acidic residues-rich tracts occupy residues 165-188 (ADME…NDED), 196-215 (EEEE…EVEE), and 224-247 (EEDE…DDDS).

As to quaternary structure, heterotetramer. Consists of four subunits: POL2, DPB2, DPB3 and DPB4.

It localises to the nucleus. Its function is as follows. As accessory component of the DNA polymerase epsilon (DNA polymerase II) participates in chromosomal DNA replication. The chain is DNA polymerase epsilon subunit D (DPB4) from Debaryomyces hansenii (strain ATCC 36239 / CBS 767 / BCRC 21394 / JCM 1990 / NBRC 0083 / IGC 2968) (Yeast).